A 627-amino-acid chain; its full sequence is 1-deoxy-D-xylulose-5-phosphate synthase (627 aa).

Thiamine diphosphate-binding positions include histidine 74 and 115–117 (GHA). Residue aspartate 146 coordinates Mg(2+). Residues 147-148 (AA), asparagine 175, phenylalanine 284, and glutamate 364 each bind thiamine diphosphate. A Mg(2+)-binding site is contributed by asparagine 175.

This sequence belongs to the transketolase family. DXPS subfamily. In terms of assembly, homodimer. Mg(2+) serves as cofactor. The cofactor is thiamine diphosphate.

The enzyme catalyses D-glyceraldehyde 3-phosphate + pyruvate + H(+) = 1-deoxy-D-xylulose 5-phosphate + CO2. It participates in metabolic intermediate biosynthesis; 1-deoxy-D-xylulose 5-phosphate biosynthesis; 1-deoxy-D-xylulose 5-phosphate from D-glyceraldehyde 3-phosphate and pyruvate: step 1/1. In terms of biological role, catalyzes the acyloin condensation reaction between C atoms 2 and 3 of pyruvate and glyceraldehyde 3-phosphate to yield 1-deoxy-D-xylulose-5-phosphate (DXP). This chain is 1-deoxy-D-xylulose-5-phosphate synthase, found in Acidobacterium capsulatum (strain ATCC 51196 / DSM 11244 / BCRC 80197 / JCM 7670 / NBRC 15755 / NCIMB 13165 / 161).